The following is a 1390-amino-acid chain: DNA-directed RNA polymerase subunit beta' (1390 aa).

Positions 70, 72, 85, and 88 each coordinate Zn(2+). Positions 460, 462, and 464 each coordinate Mg(2+). Positions 814, 888, 895, and 898 each coordinate Zn(2+).

Belongs to the RNA polymerase beta' chain family. In terms of assembly, the RNAP catalytic core consists of 2 alpha, 1 beta, 1 beta' and 1 omega subunit. When a sigma factor is associated with the core the holoenzyme is formed, which can initiate transcription. It depends on Mg(2+) as a cofactor. The cofactor is Zn(2+).

The catalysed reaction is RNA(n) + a ribonucleoside 5'-triphosphate = RNA(n+1) + diphosphate. Its function is as follows. DNA-dependent RNA polymerase catalyzes the transcription of DNA into RNA using the four ribonucleoside triphosphates as substrates. The sequence is that of DNA-directed RNA polymerase subunit beta' from Pseudoalteromonas translucida (strain TAC 125).